Consider the following 319-residue polypeptide: Transcription elongation factor A protein 1 (319 aa).

One can recognise a TFIIS N-terminal domain in the interval 1–78 (MQEIIKCREQ…DKWKQDIEGT (78 aa)). The span at 78 to 106 (TSATTTSSSSSSSSSTTSTTTTKTASPSE) shows a compositional bias: low complexity. A disordered region spans residues 78–146 (TSATTTSSSS…TTPKTSSPPI (69 aa)). Residues 107-122 (SLKRKSISEDTSDRPT) show a composition bias toward basic and acidic residues. Positions 133 to 146 (ISPPTTPKTSSPPI) are enriched in low complexity. Residues 160–272 (LRNKTIQLFV…ASMLGQNNEA (113 aa)) enclose the TFIIS central domain. Residues 275–317 (DQFQCGKCKQRKCTYTQLQTRSADEPPTTFVKCCVKGCGNRWR) form a TFIIS-type zinc finger. Residues C279, C282, C307, and C312 each coordinate Zn(2+).

This sequence belongs to the TFS-II family.

The protein resides in the nucleus. In terms of biological role, necessary for efficient RNA polymerase II transcription elongation past template-encoded arresting sites. The arresting sites in DNA have the property of trapping a certain fraction of elongating RNA polymerases that pass through, resulting in locked ternary complexes. Cleavage of the nascent transcript by S-II allows the resumption of elongation from the new 3'-terminus. This Dictyostelium discoideum (Social amoeba) protein is Transcription elongation factor A protein 1 (tcea1).